Reading from the N-terminus, the 584-residue chain is 2-succinyl-5-enolpyruvyl-6-hydroxy-3-cyclohexene-1-carboxylate synthase (584 aa).

This sequence belongs to the TPP enzyme family. MenD subfamily. Homodimer. Mg(2+) serves as cofactor. Requires Mn(2+) as cofactor. Thiamine diphosphate is required as a cofactor.

The catalysed reaction is isochorismate + 2-oxoglutarate + H(+) = 5-enolpyruvoyl-6-hydroxy-2-succinyl-cyclohex-3-ene-1-carboxylate + CO2. It functions in the pathway quinol/quinone metabolism; 1,4-dihydroxy-2-naphthoate biosynthesis; 1,4-dihydroxy-2-naphthoate from chorismate: step 2/7. Its pathway is quinol/quinone metabolism; menaquinone biosynthesis. Catalyzes the thiamine diphosphate-dependent decarboxylation of 2-oxoglutarate and the subsequent addition of the resulting succinic semialdehyde-thiamine pyrophosphate anion to isochorismate to yield 2-succinyl-5-enolpyruvyl-6-hydroxy-3-cyclohexene-1-carboxylate (SEPHCHC). The chain is 2-succinyl-5-enolpyruvyl-6-hydroxy-3-cyclohexene-1-carboxylate synthase from Bacillus cereus (strain ATCC 14579 / DSM 31 / CCUG 7414 / JCM 2152 / NBRC 15305 / NCIMB 9373 / NCTC 2599 / NRRL B-3711).